A 150-amino-acid chain; its full sequence is Histone H3-like centromeric protein A (150 aa).

The disordered stretch occupies residues 1–56 (MRPGSTPASRRKSRPPRRVSPPLPTTSTRSPGRPSAPEQRKAPRATPKKRFRPGTR). The span at 25-37 (TTSTRSPGRPSAP) shows a compositional bias: low complexity. Positions 42-53 (APRATPKKRFRP) are enriched in basic residues. The tract at residues 53–150 (PGTRALMEIR…RIRGVTEGLG (98 aa)) is H3-like.

It belongs to the histone H3 family. In terms of assembly, component of centromeric nucleosomes, where DNA is wrapped around a histone octamer core. The octamer contains two molecules each of H2A, H2B, CENPA and H4 assembled in one CENPA-H4 heterotetramer and two H2A-H2B heterodimers. CENPA modulates the DNA-binding characteristics of nucleosomes so that protruding DNA ends have higher flexibility than in nucleosomes containing conventional histone H3.

Its subcellular location is the nucleus. It is found in the chromosome. It localises to the centromere. Histone H3-like nucleosomal protein that is specifically found in centromeric nucleosomes. Replaces conventional H3 in the nucleosome core of centromeric chromatin that serves as an assembly site for the inner kinetochore. The presence of CENPA subtly modifies the nucleosome structure and the way DNA is wrapped around the nucleosome and gives rise to protruding DNA ends that are less well-ordered and rigid compared to nucleosomes containing histone H3. May serve as an epigenetic mark that propagates centromere identity through replication and cell division. Required for recruitment and assembly of kinetochore proteins, and as a consequence required for progress through mitosis, chromosome segregation and cytokinesis. This chain is Histone H3-like centromeric protein A (cenpa), found in Xenopus tropicalis (Western clawed frog).